The primary structure comprises 159 residues: Testis-specific XK-related protein, Y-linked (159 aa).

The next 3 membrane-spanning stretches (helical) occupy residues 1-21 (MFIF…VGAI), 45-65 (IYLM…LAFF), and 72-92 (GSLH…WLEF).

It belongs to the XK family. As to expression, testis specific.

Its subcellular location is the membrane. The protein is Testis-specific XK-related protein, Y-linked (XKRY) of Homo sapiens (Human).